We begin with the raw amino-acid sequence, 332 residues long: Biotin synthase (332 aa).

One can recognise a Radical SAM core domain in the interval 53-282 (YFGKKVKLNM…SKEIRISGGR (230 aa)). The [4Fe-4S] cluster site is built by C71, C75, and C78. 4 residues coordinate [2Fe-2S] cluster: C115, C147, C207, and R277.

This sequence belongs to the radical SAM superfamily. Biotin synthase family. As to quaternary structure, homodimer. Requires [4Fe-4S] cluster as cofactor. It depends on [2Fe-2S] cluster as a cofactor.

It carries out the reaction (4R,5S)-dethiobiotin + (sulfur carrier)-SH + 2 reduced [2Fe-2S]-[ferredoxin] + 2 S-adenosyl-L-methionine = (sulfur carrier)-H + biotin + 2 5'-deoxyadenosine + 2 L-methionine + 2 oxidized [2Fe-2S]-[ferredoxin]. The protein operates within cofactor biosynthesis; biotin biosynthesis; biotin from 7,8-diaminononanoate: step 2/2. Its function is as follows. Catalyzes the conversion of dethiobiotin (DTB) to biotin by the insertion of a sulfur atom into dethiobiotin via a radical-based mechanism. This Bacillus cytotoxicus (strain DSM 22905 / CIP 110041 / 391-98 / NVH 391-98) protein is Biotin synthase.